Reading from the N-terminus, the 261-residue chain is 1-(5-phosphoribosyl)-5-[(5-phosphoribosylamino)methylideneamino] imidazole-4-carboxamide isomerase (261 aa).

Asp-8 serves as the catalytic Proton acceptor. The active-site Proton donor is the Asp-139.

The protein belongs to the HisA/HisF family.

The protein resides in the cytoplasm. It catalyses the reaction 1-(5-phospho-beta-D-ribosyl)-5-[(5-phospho-beta-D-ribosylamino)methylideneamino]imidazole-4-carboxamide = 5-[(5-phospho-1-deoxy-D-ribulos-1-ylimino)methylamino]-1-(5-phospho-beta-D-ribosyl)imidazole-4-carboxamide. It functions in the pathway amino-acid biosynthesis; L-histidine biosynthesis; L-histidine from 5-phospho-alpha-D-ribose 1-diphosphate: step 4/9. In Janthinobacterium sp. (strain Marseille) (Minibacterium massiliensis), this protein is 1-(5-phosphoribosyl)-5-[(5-phosphoribosylamino)methylideneamino] imidazole-4-carboxamide isomerase.